Reading from the N-terminus, the 554-residue chain is Nuclear division defective protein 1 (554 aa).

Disordered regions lie at residues 1–31 and 98–117; these read MDRD…NNAD and IQQQ…ALGS. Over residues 98-113 the composition is skewed to low complexity; the sequence is IQQQQQQQQQQQQQQQ. Residue Thr-319 is modified to Phosphothreonine; by CDC28. Disordered stretches follow at residues 410–475 and 493–554; these read PTPN…GKKP and SSSS…FNSQ. The segment covering 411 to 427 has biased composition (polar residues); the sequence is TPNCNSLHSTTTGTSAL. The segment covering 448–465 has biased composition (low complexity); it reads SSSNTVSFKSKSGNNNSK. A compositionally biased stretch (basic residues) spans 466 to 475; it reads GRIKKNGKKP. Residues 493–513 are compositionally biased toward low complexity; that stretch reads SSSSLSSSLNASSSAGNSNSN. Residues 515–524 show a composition bias toward basic residues; it reads TKKRASKLKR. Residues 525–536 show a composition bias toward low complexity; sequence SQSLLSDSGSKS. A compositionally biased stretch (polar residues) spans 539–554; it reads RKSCNSKSNGNLFNSQ.

In terms of assembly, forms an activator complex with FKH2. Post-translationally, phosphorylation of Thr-319 by CDC28 is required for the interaction with FKH2 and recruitment to promoters.

It is found in the cytoplasm. It localises to the nucleus. Its function is as follows. Transcription activator involved in G2/M transcription through its association with FKH2. This chain is Nuclear division defective protein 1 (NDD1), found in Saccharomyces cerevisiae (strain ATCC 204508 / S288c) (Baker's yeast).